A 1060-amino-acid chain; its full sequence is FACT complex subunit SPT16 (1060 aa).

The interval Phe-458–Glu-490 is disordered. The segment covering Leu-478–Glu-490 has biased composition (polar residues). Residues Asn-508–Glu-532 are a coiled coil. The segment at Gln-977–Asp-1060 is disordered. Acidic residues-rich tracts occupy residues Glu-979–Ser-990 and Glu-997–Asp-1044. Residues Ala-1045–Asp-1060 show a composition bias toward basic and acidic residues.

This sequence belongs to the peptidase M24 family. SPT16 subfamily. As to quaternary structure, forms a stable heterodimer with POB3. The SPT16-POB3 dimer weakly associates with multiple molecules of NHP6 to form the FACT complex.

The protein localises to the nucleus. It localises to the chromosome. Component of the FACT complex, a general chromatin factor that acts to reorganize nucleosomes. The FACT complex is involved in multiple processes that require DNA as a template such as mRNA elongation, DNA replication and DNA repair. During transcription elongation the FACT complex acts as a histone chaperone that both destabilizes and restores nucleosomal structure. It facilitates the passage of RNA polymerase II and transcription by promoting the dissociation of one histone H2A-H2B dimer from the nucleosome, then subsequently promotes the reestablishment of the nucleosome following the passage of RNA polymerase II. The protein is FACT complex subunit SPT16 (CDC68) of Candida albicans (strain SC5314 / ATCC MYA-2876) (Yeast).